The following is a 433-amino-acid chain: Pyrimidine-nucleoside phosphorylase (433 aa).

81 to 83 (KHS) is a phosphate binding site. K(+) is bound by residues glycine 88 and threonine 90. Phosphate-binding positions include threonine 92, 108–110 (KMS), and threonine 120. Positions 168 and 187 each coordinate substrate. K(+)-binding residues include leucine 243, alanine 246, and glutamate 255.

It belongs to the thymidine/pyrimidine-nucleoside phosphorylase family. Homodimer. It depends on K(+) as a cofactor.

The enzyme catalyses uridine + phosphate = alpha-D-ribose 1-phosphate + uracil. The catalysed reaction is thymidine + phosphate = 2-deoxy-alpha-D-ribose 1-phosphate + thymine. It catalyses the reaction 2'-deoxyuridine + phosphate = 2-deoxy-alpha-D-ribose 1-phosphate + uracil. Its function is as follows. Catalyzes phosphorolysis of the pyrimidine nucleosides uridine, thymidine and 2'-deoxyuridine with the formation of the corresponding pyrimidine base and ribose-1-phosphate. In Bacillus subtilis (strain 168), this protein is Pyrimidine-nucleoside phosphorylase.